Consider the following 403-residue polypeptide: Tyrosine--tRNA ligase (403 aa).

The 'HIGH' region signature appears at 42 to 51; it reads PTAPDLHLGH. Residues 226 to 230 carry the 'KMSKS' region motif; the sequence is KMSKS. Lysine 229 is a binding site for ATP. In terms of domain architecture, S4 RNA-binding spans 339-400; sequence LRLAGLLTAA…GKRNFARVLL (62 aa).

Belongs to the class-I aminoacyl-tRNA synthetase family. TyrS type 2 subfamily. As to quaternary structure, homodimer.

It is found in the cytoplasm. It catalyses the reaction tRNA(Tyr) + L-tyrosine + ATP = L-tyrosyl-tRNA(Tyr) + AMP + diphosphate + H(+). Functionally, catalyzes the attachment of tyrosine to tRNA(Tyr) in a two-step reaction: tyrosine is first activated by ATP to form Tyr-AMP and then transferred to the acceptor end of tRNA(Tyr). This is Tyrosine--tRNA ligase from Xanthomonas euvesicatoria pv. vesicatoria (strain 85-10) (Xanthomonas campestris pv. vesicatoria).